The primary structure comprises 208 residues: Uridine kinase (208 aa).

11–18 lines the ATP pocket; that stretch reads GGTGSGKS.

This sequence belongs to the uridine kinase family.

Its subcellular location is the cytoplasm. The enzyme catalyses uridine + ATP = UMP + ADP + H(+). The catalysed reaction is cytidine + ATP = CMP + ADP + H(+). It functions in the pathway pyrimidine metabolism; CTP biosynthesis via salvage pathway; CTP from cytidine: step 1/3. The protein operates within pyrimidine metabolism; UMP biosynthesis via salvage pathway; UMP from uridine: step 1/1. This chain is Uridine kinase, found in Clostridium perfringens (strain SM101 / Type A).